The sequence spans 627 residues: Pentatricopeptide repeat-containing protein At2g35030, mitochondrial (627 aa).

A mitochondrion-targeting transit peptide spans 1–44 (MQSRALSRLRSYYKRSSVFPSSDNDRSVQLFNLVRSIYSSSSRP). 14 PPR repeats span residues 45-75 (RVPQPEWLIGELCKVGKIAEARKLFDGLPER), 76-110 (DVVTWTHVITGYIKLGDMREARELFDRVDSRKNVV), 111-138 (TWTAMVSGYLRSKQLSIAEMLFQEMPER), 139-173 (NVVSWNTMIDGYAQSGRIDKALELFDEMPERNIVS), 174-200 (WNSMVKALVQRGRIDEAMNLFERMPRR), 201-235 (DVVSWTAMVDGLAKNGKVDEARRLFDCMPERNIIS), 236-262 (WNAMITGYAQNNRIDEADQLFQVMPER), 263-293 (DFASWNTMITGFIRNREMNKACGLFDRMPEK), 294-328 (NVISWTTMITGYVENKENEEALNVFSKMLRDGSVK), 330-360 (NVGTYVSILSACSDLAGLVEGQQIHQLISKS), 365-396 (NEIVTSALLNMYSKSGELIAARKMFDNGLVCQ), 398-432 (DLISWNSMIAVYAHHGHGKEAIEMYNQMRKHGFKP), 433-467 (SAVTYLNLLFACSHAGLVEKGMEFFKDLVRDESLP), and 469-499 (REEHYTCLVDLCGRAGRLKDVTNFINCDDAR). A type E motif region spans residues 504 to 579 (FYGAILSACN…QPGCSWVKVG (76 aa)). The type E(+) motif stretch occupies residues 580–610 (KQNHLFVVGDKSHPQFEALDSILSDLRNKMR).

The protein belongs to the PPR family. PCMP-E subfamily.

The protein localises to the mitochondrion. This is Pentatricopeptide repeat-containing protein At2g35030, mitochondrial (PCMP-E15) from Arabidopsis thaliana (Mouse-ear cress).